The primary structure comprises 934 residues: Serine/threonine-protein kinase PknD (934 aa).

Residues 4–296 (YELIRLIGRG…ELRKALQPHL (293 aa)) enclose the Protein kinase domain. Residues 10-18 (IGRGGMGEV) and Lys-33 contribute to the ATP site. Catalysis depends on Asp-138, which acts as the Proton acceptor.

Belongs to the protein kinase superfamily. Ser/Thr protein kinase family. Post-translationally, autophosphorylated on serine and threonine residues.

The catalysed reaction is L-seryl-[protein] + ATP = O-phospho-L-seryl-[protein] + ADP + H(+). It catalyses the reaction L-threonyl-[protein] + ATP = O-phospho-L-threonyl-[protein] + ADP + H(+). Functionally, together with the serine/threonine kinase Pkn1, may play a role in the specific interactions with host proteins during intracellular growth. This is Serine/threonine-protein kinase PknD from Chlamydia muridarum (strain MoPn / Nigg).